Consider the following 143-residue polypeptide: UPF0201 protein Tneu_0685 (143 aa).

The protein belongs to the UPF0201 family.

The chain is UPF0201 protein Tneu_0685 from Pyrobaculum neutrophilum (strain DSM 2338 / JCM 9278 / NBRC 100436 / V24Sta) (Thermoproteus neutrophilus).